A 485-amino-acid polypeptide reads, in one-letter code: Glutamyl-tRNA(Gln) amidotransferase subunit A (485 aa).

Residues K76 and S152 each act as charge relay system in the active site. S176 serves as the catalytic Acyl-ester intermediate.

The protein belongs to the amidase family. GatA subfamily. As to quaternary structure, heterotrimer of A, B and C subunits.

It carries out the reaction L-glutamyl-tRNA(Gln) + L-glutamine + ATP + H2O = L-glutaminyl-tRNA(Gln) + L-glutamate + ADP + phosphate + H(+). Allows the formation of correctly charged Gln-tRNA(Gln) through the transamidation of misacylated Glu-tRNA(Gln) in organisms which lack glutaminyl-tRNA synthetase. The reaction takes place in the presence of glutamine and ATP through an activated gamma-phospho-Glu-tRNA(Gln). The sequence is that of Glutamyl-tRNA(Gln) amidotransferase subunit A from Dechloromonas aromatica (strain RCB).